The sequence spans 195 residues: Imidazoleglycerol-phosphate dehydratase (195 aa).

Belongs to the imidazoleglycerol-phosphate dehydratase family.

It is found in the cytoplasm. It carries out the reaction D-erythro-1-(imidazol-4-yl)glycerol 3-phosphate = 3-(imidazol-4-yl)-2-oxopropyl phosphate + H2O. It participates in amino-acid biosynthesis; L-histidine biosynthesis; L-histidine from 5-phospho-alpha-D-ribose 1-diphosphate: step 6/9. This chain is Imidazoleglycerol-phosphate dehydratase, found in Paraburkholderia phytofirmans (strain DSM 17436 / LMG 22146 / PsJN) (Burkholderia phytofirmans).